The chain runs to 247 residues: Carboxy-S-adenosyl-L-methionine synthase (247 aa).

S-adenosyl-L-methionine is bound by residues Tyr-40, 65 to 67 (GAS), 90 to 91 (DN), 122 to 123 (DI), Asn-137, and Arg-204.

The protein belongs to the class I-like SAM-binding methyltransferase superfamily. Cx-SAM synthase family. Homodimer.

The enzyme catalyses prephenate + S-adenosyl-L-methionine = carboxy-S-adenosyl-L-methionine + 3-phenylpyruvate + H2O. Catalyzes the conversion of S-adenosyl-L-methionine (SAM) to carboxy-S-adenosyl-L-methionine (Cx-SAM). This Ectopseudomonas mendocina (strain ymp) (Pseudomonas mendocina) protein is Carboxy-S-adenosyl-L-methionine synthase.